The primary structure comprises 802 residues: Osmosensitive cation channel TMEM63C (802 aa).

Residues 1–35 (MSAFPDSMDQKFHNMTVNECFQSRSTVLQGQPFGG) lie on the Extracellular side of the membrane. The helical transmembrane segment at 36–60 (IPTVLVLNIILWVFVVLLYSFLRKA) threads the bilayer. The Cytoplasmic portion of the chain corresponds to 61–124 (AWDYGRLALL…RDRDLINKCG (64 aa)). A phosphoserine mark is found at Ser75 and Ser78. Residues 125–157 (DDARIYITFQYHLIIFVLILCIPSLGIILPVNY) traverse the membrane as a helical segment. Topologically, residues 158–180 (IGTVLDWNSHFGRTTIVNVSTES) are extracellular. A helical membrane pass occupies residues 181-205 (KFLWLHSLFAFLYFLINLAFMGHHC). At 206 to 401 (LGFVPKKSLH…IIWKHLSIRR (196 aa)) the chain is on the cytoplasmic side. Residues 402–431 (FSWWTRFIAINTFLFFLFFFLTTPAIIINT) traverse the membrane as a helical segment. Topologically, residues 432-446 (IDIYNVTRPIEKLQS) are extracellular. The helical transmembrane segment at 447-476 (PIVTQFFPSVLLWAFTVTMPLLVYLSAFLE) threads the bilayer. Residues 477–480 (AHWT) lie on the Cytoplasmic side of the membrane. A helical transmembrane segment spans residues 481–517 (RSSQNLIIVHKCYIFLVFMVVILPSMGLTSLHVFLRW). The Extracellular segment spans residues 518 to 540 (LFDIYYLEHATIRFQCVFLPDNG). A helical membrane pass occupies residues 541–573 (AFFINYVITAALLGTGMELMRLGSLCTYCTRLF). Over 574-593 (LSKSEPERVHIRKNQATDFQ) the chain is Cytoplasmic. A helical transmembrane segment spans residues 594-612 (FGREYAWMLNVFSVVMAYS). Topologically, residues 613-615 (ITC) are extracellular. The chain crosses the membrane as a helical span at residues 616–640 (PIIVPFGLLYLCMKHITDRYNMYYS). Topologically, residues 641 to 647 (YAPTKLN) are cytoplasmic. The chain crosses the membrane as a helical span at residues 648-676 (AQIHMAAVYQAIFAPLLGLFWMLFFSILR). The Extracellular portion of the chain corresponds to 677–681 (VGSLH). The helical transmembrane segment at 682–702 (SITLFSMSSLIISVVIAFSGV) threads the bilayer. Residues 703 to 802 (FLGKLRIAQR…EGLEMEGQSH (100 aa)) lie on the Cytoplasmic side of the membrane. The segment at 753 to 785 (TPASSPARHTYGTINSQPEEGEEESGLRGFARE) is disordered.

This sequence belongs to the CSC1 (TC 1.A.17) family. As to quaternary structure, monomer.

It is found in the endoplasmic reticulum membrane. The protein resides in the cell membrane. The enzyme catalyses Ca(2+)(in) = Ca(2+)(out). Functionally, acts as an osmosensitive cation channel preferentially activated upon hypotonic stress. In contrast to TMEM63B, does not show phospholipid scramblase activity. Enriched in mitochondria-ER contact sites where it may regulate the metabolite flux and organelles' morphologies in response to osmotic changes. In particular may regulate mitochondrial motility and function in motor neuron axons. Required for the functional integrity of the kidney glomerular filtration barrier. The sequence is that of Osmosensitive cation channel TMEM63C from Mus musculus (Mouse).